Consider the following 294-residue polypeptide: Phosphatidylglycerol--prolipoprotein diacylglyceryl transferase (294 aa).

Helical transmembrane passes span 10–30 (VALALGPIEIHWYGLMYLLAF), 55–75 (LVFYGALGVILGGRIGYVLFY), 91–111 (WEGGMSFHGGFIGVMLGMWFF), 119–139 (AFQVFDFIVPCVPTGLLFGRI), 196–216 (PSQLYEAFAEGLLLFIFLWWY), 224–244 (MAASAVFLLGYGISRFIIEFF), and 258–278 (WMTKGQLLSAPMIIAGLIMLI). Arg138 serves as a coordination point for a 1,2-diacyl-sn-glycero-3-phospho-(1'-sn-glycerol).

The protein belongs to the Lgt family.

It is found in the cell inner membrane. The enzyme catalyses L-cysteinyl-[prolipoprotein] + a 1,2-diacyl-sn-glycero-3-phospho-(1'-sn-glycerol) = an S-1,2-diacyl-sn-glyceryl-L-cysteinyl-[prolipoprotein] + sn-glycerol 1-phosphate + H(+). Its pathway is protein modification; lipoprotein biosynthesis (diacylglyceryl transfer). In terms of biological role, catalyzes the transfer of the diacylglyceryl group from phosphatidylglycerol to the sulfhydryl group of the N-terminal cysteine of a prolipoprotein, the first step in the formation of mature lipoproteins. The polypeptide is Phosphatidylglycerol--prolipoprotein diacylglyceryl transferase (Psychrobacter arcticus (strain DSM 17307 / VKM B-2377 / 273-4)).